Consider the following 405-residue polypeptide: Deoxyguanosinetriphosphate triphosphohydrolase-like protein (405 aa).

Positions 75 to 219 (RLTHTIEVAQ…AAIADDIAYN (145 aa)) constitute an HD domain.

Belongs to the dGTPase family. Type 2 subfamily.

This Agrobacterium fabrum (strain C58 / ATCC 33970) (Agrobacterium tumefaciens (strain C58)) protein is Deoxyguanosinetriphosphate triphosphohydrolase-like protein.